Reading from the N-terminus, the 351-residue chain is Blue-sensitive opsin (351 aa).

The Extracellular portion of the chain corresponds to 1 to 40 (MKQVPEFHEDFYIPIPLDINNLSAYSPFLVPQDHLGNQGI). N-linked (GlcNAc...) asparagine glycosylation is present at Asn21. A helical transmembrane segment spans residues 41 to 65 (FMAMSVFMFFIFIGGASINILTILC). Residues 66–77 (TIQFKKLRSHLN) are Cytoplasmic-facing. Residues 78–103 (YILVNLSIANLFVAIFGSPLSFYSFF) traverse the membrane as a helical segment. The Extracellular portion of the chain corresponds to 104–117 (NRYFIFGATACKIE). Residues Cys114 and Cys191 are joined by a disulfide bond. Residues 118–137 (GFLATLGGMVGLWSLAVVAF) form a helical membrane-spanning segment. Over 138–156 (ERWLVICKPLGNFTFKTPH) the chain is Cytoplasmic. A helical transmembrane segment spans residues 157-180 (AIAGCILPWISALAASLPPLFGWS). The Extracellular portion of the chain corresponds to 181–206 (RYIPEGLQCSCGPDWYTTNNKYNNES). A helical transmembrane segment spans residues 207–234 (YVMFLFCFCFAVPFGTIVFCYGQLLITL). Residues 235-256 (KLAAKAQADSASTQKAEREVTK) are Cytoplasmic-facing. Residues 257 to 280 (MVVVMVLGFLVCWAPYASFSLWIV) traverse the membrane as a helical segment. At 281 to 288 (SHRGEEFD) the chain is on the extracellular side. The chain crosses the membrane as a helical span at residues 289–313 (LRMATIPSCLSKASTVYNPVIYVLM). Lys300 is modified (N6-(retinylidene)lysine). Topologically, residues 314–351 (NKQFRSCMMKMVCGKNIEEDEASTSSQVTQVSSVAPEK) are cytoplasmic.

Belongs to the G-protein coupled receptor 1 family. Opsin subfamily. In terms of processing, phosphorylated on some or all of the serine and threonine residues present in the C-terminal region. In terms of tissue distribution, the color pigments are found in the cone photoreceptor cells.

Its subcellular location is the membrane. Visual pigments are the light-absorbing molecules that mediate vision. They consist of an apoprotein, opsin, covalently linked to cis-retinal. The polypeptide is Blue-sensitive opsin (Carassius auratus (Goldfish)).